A 264-amino-acid chain; its full sequence is Merozoite surface protein 2 (264 aa).

An N-terminal signal peptide occupies residues 1–20; it reads MKVIKTLSIINFFIFVTFNI. N-linked (GlcNAc...) asparagine glycosylation is found at Asn-22 and Asn-36. A polymorphic region region spans residues 44–190; sequence ANEGSNTNSV…PQTAENENPA (147 aa). A disordered region spans residues 46-227; sequence EGSNTNSVGA…QKECTDGNKE (182 aa). 2 repeat units span residues 60-91 and 92-123. Residues 60–123 are 2 X 32 AA perfects repeats; the sequence is ADTIASGSQR…GESQTTTPTA (64 aa). Positions 70–81 are enriched in low complexity; that stretch reads STNSASTSTTNN. Over residues 82 to 101 the composition is skewed to polar residues; the sequence is GESQTTTPTAADTIASGSQR. Over residues 102–145 the composition is skewed to low complexity; the sequence is STNSASTSTTNNGESQTTTPTAADTPTATESISPSPPITTTESS. A compositionally biased stretch (basic and acidic residues) spans 154–166; that stretch reads TDGKGEESEKQNE. Asn-213 is a glycosylation site (N-linked (GlcNAc...) asparagine). Positions 217–226 are enriched in basic and acidic residues; the sequence is SQKECTDGNK. A disulfide bridge connects residues Cys-221 and Cys-229. N-linked (GlcNAc...) asparagine glycosylation occurs at Asn-238. The GPI-anchor amidated asparagine moiety is linked to residue Asn-238. The propeptide at 239 to 264 is removed in mature form; the sequence is SSNIASINKFVVLISATLVLSFAIFI.

The protein resides in the cell membrane. In terms of biological role, may play a role in the merozoite attachment to the erythrocyte. The polypeptide is Merozoite surface protein 2 (Plasmodium falciparum (isolate FC27 / Papua New Guinea)).